Here is a 300-residue protein sequence, read N- to C-terminus: tRNA dimethylallyltransferase 2 (300 aa).

Position 13 to 20 (13 to 20 (GPTGVGKT)) interacts with ATP. 15–20 (TGVGKT) is a binding site for substrate. The interval 38-41 (DSRQ) is interaction with substrate tRNA.

Belongs to the IPP transferase family. Monomer. Mg(2+) is required as a cofactor.

It catalyses the reaction adenosine(37) in tRNA + dimethylallyl diphosphate = N(6)-dimethylallyladenosine(37) in tRNA + diphosphate. Its function is as follows. Catalyzes the transfer of a dimethylallyl group onto the adenine at position 37 in tRNAs that read codons beginning with uridine, leading to the formation of N6-(dimethylallyl)adenosine (i(6)A). The chain is tRNA dimethylallyltransferase 2 from Porphyromonas gingivalis (strain ATCC 33277 / DSM 20709 / CIP 103683 / JCM 12257 / NCTC 11834 / 2561).